We begin with the raw amino-acid sequence, 472 residues long: 3-isopropylmalate dehydratase large subunit (472 aa).

Cys-349, Cys-409, and Cys-412 together coordinate [4Fe-4S] cluster.

It belongs to the aconitase/IPM isomerase family. LeuC type 1 subfamily. In terms of assembly, heterodimer of LeuC and LeuD. [4Fe-4S] cluster is required as a cofactor.

It carries out the reaction (2R,3S)-3-isopropylmalate = (2S)-2-isopropylmalate. The protein operates within amino-acid biosynthesis; L-leucine biosynthesis; L-leucine from 3-methyl-2-oxobutanoate: step 2/4. In terms of biological role, catalyzes the isomerization between 2-isopropylmalate and 3-isopropylmalate, via the formation of 2-isopropylmaleate. The polypeptide is 3-isopropylmalate dehydratase large subunit (Rhodospirillum rubrum (strain ATCC 11170 / ATH 1.1.1 / DSM 467 / LMG 4362 / NCIMB 8255 / S1)).